The following is a 316-amino-acid chain: 4-hydroxy-3-methylbut-2-enyl diphosphate reductase (316 aa).

Cys12 is a [4Fe-4S] cluster binding site. The (2E)-4-hydroxy-3-methylbut-2-enyl diphosphate site is built by His41 and His74. Residues His41 and His74 each coordinate dimethylallyl diphosphate. Isopentenyl diphosphate contacts are provided by His41 and His74. A [4Fe-4S] cluster-binding site is contributed by Cys96. His124 contacts (2E)-4-hydroxy-3-methylbut-2-enyl diphosphate. Residue His124 coordinates dimethylallyl diphosphate. His124 lines the isopentenyl diphosphate pocket. Glu126 acts as the Proton donor in catalysis. Thr167 lines the (2E)-4-hydroxy-3-methylbut-2-enyl diphosphate pocket. A [4Fe-4S] cluster-binding site is contributed by Cys197. 4 residues coordinate (2E)-4-hydroxy-3-methylbut-2-enyl diphosphate: Ser225, Ser226, Asn227, and Ser269. Residues Ser225, Ser226, Asn227, and Ser269 each coordinate dimethylallyl diphosphate. Isopentenyl diphosphate-binding residues include Ser225, Ser226, Asn227, and Ser269.

This sequence belongs to the IspH family. As to quaternary structure, homodimer. It depends on [4Fe-4S] cluster as a cofactor.

It catalyses the reaction isopentenyl diphosphate + 2 oxidized [2Fe-2S]-[ferredoxin] + H2O = (2E)-4-hydroxy-3-methylbut-2-enyl diphosphate + 2 reduced [2Fe-2S]-[ferredoxin] + 2 H(+). The enzyme catalyses dimethylallyl diphosphate + 2 oxidized [2Fe-2S]-[ferredoxin] + H2O = (2E)-4-hydroxy-3-methylbut-2-enyl diphosphate + 2 reduced [2Fe-2S]-[ferredoxin] + 2 H(+). It participates in isoprenoid biosynthesis; dimethylallyl diphosphate biosynthesis; dimethylallyl diphosphate from (2E)-4-hydroxy-3-methylbutenyl diphosphate: step 1/1. The protein operates within isoprenoid biosynthesis; isopentenyl diphosphate biosynthesis via DXP pathway; isopentenyl diphosphate from 1-deoxy-D-xylulose 5-phosphate: step 6/6. Functionally, catalyzes the conversion of 1-hydroxy-2-methyl-2-(E)-butenyl 4-diphosphate (HMBPP) into a mixture of isopentenyl diphosphate (IPP) and dimethylallyl diphosphate (DMAPP). Acts in the terminal step of the DOXP/MEP pathway for isoprenoid precursor biosynthesis. The protein is 4-hydroxy-3-methylbut-2-enyl diphosphate reductase of Klebsiella pneumoniae (strain 342).